The following is a 206-amino-acid chain: Inner membrane-spanning protein YciB (206 aa).

5 consecutive transmembrane segments (helical) span residues 22–42 (IYTA…LTYF), 50–70 (MQVI…FLHD), 76–96 (WKVT…HIMG), 118–138 (INWA…YVAF), and 148–168 (FKVF…GVYI). The segment covering 178 to 189 (LPKDKHQQRDQE) has biased composition (basic and acidic residues). Residues 178 to 206 (LPKDKHQQRDQETQNDTQQELSGKNTEEK) form a disordered region. Residues 191-206 (QNDTQQELSGKNTEEK) are compositionally biased toward polar residues.

This sequence belongs to the YciB family.

It is found in the cell inner membrane. In terms of biological role, plays a role in cell envelope biogenesis, maintenance of cell envelope integrity and membrane homeostasis. The sequence is that of Inner membrane-spanning protein YciB from Vibrio atlanticus (strain LGP32) (Vibrio splendidus (strain Mel32)).